Here is a 506-residue protein sequence, read N- to C-terminus: Maturase K (506 aa).

This sequence belongs to the intron maturase 2 family. MatK subfamily.

It localises to the plastid. The protein resides in the chloroplast. Usually encoded in the trnK tRNA gene intron. Probably assists in splicing its own and other chloroplast group II introns. In Arctostaphylos uva-ursi (Bearberry), this protein is Maturase K.